The primary structure comprises 699 residues: Methylcrotonoyl-CoA carboxylase subunit alpha, mitochondrial (699 aa).

Residues 30–475 (ITKILIANRG…ETGFIPIHRE (446 aa)) enclose the Biotin carboxylation domain. ATP contacts are provided by K144, E228, and H263. One can recognise an ATP-grasp domain in the interval 148–345 (KDIMIKAGVP…LVEWQLKVAE (198 aa)). R320 is a catalytic residue. In terms of domain architecture, Biotinyl-binding spans 624-699 (KGADGVLGSL…EDKKTLAVIV (76 aa)). Residue K665 is modified to N6-biotinyllysine.

In terms of assembly, probably a dodecamer composed of six biotin-containing alpha subunits and six beta subunits. Mn(2+) is required as a cofactor. Requires biotin as cofactor.

It is found in the mitochondrion matrix. The catalysed reaction is 3-methylbut-2-enoyl-CoA + hydrogencarbonate + ATP = 3-methyl-(2E)-glutaconyl-CoA + ADP + phosphate + H(+). Its pathway is amino-acid degradation; L-leucine degradation; (S)-3-hydroxy-3-methylglutaryl-CoA from 3-isovaleryl-CoA: step 2/3. Biotin-attachment subunit of the 3-methylcrotonyl-CoA carboxylase, an enzyme that catalyzes the conversion of 3-methylcrotonyl-CoA to 3-methylglutaconyl-CoA, a critical step for leucine and isovaleric acid catabolism. The protein is Methylcrotonoyl-CoA carboxylase subunit alpha, mitochondrial (mccA) of Dictyostelium discoideum (Social amoeba).